The primary structure comprises 225 residues: Phosphoserine phosphatase (225 aa).

N-acetylmethionine is present on M1. The active-site Nucleophile is the D20. D20 and D22 together coordinate Mg(2+). Residue 20 to 22 (DVD) coordinates L-serine. Catalysis depends on D22, which acts as the Proton donor. O-phospho-L-serine is bound at residue M52. Residue G53 coordinates phosphate. Residues 109–111 (SGG) and K158 each bind L-serine. Residues 109–111 (SGG) and K158 each bind O-phospho-L-serine. D179 is a binding site for Mg(2+). T182 lines the O-phospho-L-serine pocket. T182 serves as a coordination point for phosphate.

The protein belongs to the HAD-like hydrolase superfamily. SerB family. As to quaternary structure, homodimer. Mg(2+) is required as a cofactor.

The protein localises to the cytoplasm. Its subcellular location is the cytosol. The catalysed reaction is O-phospho-L-serine + H2O = L-serine + phosphate. It carries out the reaction O-phospho-D-serine + H2O = D-serine + phosphate. It participates in amino-acid biosynthesis; L-serine biosynthesis; L-serine from 3-phospho-D-glycerate: step 3/3. Catalyzes the last irreversible step in the biosynthesis of L-serine from carbohydrates, the dephosphorylation of O-phospho-L-serine to L-serine. L-serine can then be used in protein synthesis, to produce other amino acids, in nucleotide metabolism or in glutathione synthesis, or can be racemized to D-serine, a neuromodulator. May also act on O-phospho-D-serine. The chain is Phosphoserine phosphatase from Rattus norvegicus (Rat).